Here is a 353-residue protein sequence, read N- to C-terminus: uncharacterized protein (353 aa).

A signal peptide spans 1–23 (MSAGKGLLLVICLLFLPLKSAMA).

This sequence to E.coli YqiI.

May be involved in a fimbrial system chaperoned by YbgP and exported by YbgQ. This is an uncharacterized protein from Escherichia coli (strain K12).